We begin with the raw amino-acid sequence, 133 residues long: ATP synthase epsilon chain (133 aa).

It belongs to the ATPase epsilon chain family. In terms of assembly, F-type ATPases have 2 components, CF(1) - the catalytic core - and CF(0) - the membrane proton channel. CF(1) has five subunits: alpha(3), beta(3), gamma(1), delta(1), epsilon(1). CF(0) has three main subunits: a, b and c.

It is found in the cell membrane. Functionally, produces ATP from ADP in the presence of a proton gradient across the membrane. This is ATP synthase epsilon chain from Lawsonia intracellularis (strain PHE/MN1-00).